The following is a 140-amino-acid chain: Phosphatidylinositol N-acetylglucosaminyltransferase subunit GPI19 (140 aa).

The Cytoplasmic segment spans residues 1–12 (MYTKEYYWFSQY). A helical transmembrane segment spans residues 13–33 (MIITSTLVLTIIWSILPSSLG). The Lumenal segment spans residues 34–52 (EAAPKQFINTLLDIFPQRR). The chain crosses the membrane as a helical span at residues 53–73 (WIITLESIMLMGMLCTYIGLL). Residues 74–140 (MYNEDTLTPP…YLYDNDHTST (67 aa)) are Cytoplasmic-facing.

The protein belongs to the GPI19 family. As to quaternary structure, component of the phosphatidylinositol N-acetylglucosaminyltransferase (GPI-GlcNAc transferase) complex composed of at least GPI1, GPI2, GPI3, GPI15, GPI19 and ERI1. Interacts with GPI2.

It is found in the endoplasmic reticulum membrane. It catalyses the reaction a 1,2-diacyl-sn-glycero-3-phospho-(1D-myo-inositol) + UDP-N-acetyl-alpha-D-glucosamine = a 6-(N-acetyl-alpha-D-glucosaminyl)-1-(1,2-diacyl-sn-glycero-3-phospho)-1D-myo-inositol + UDP + H(+). It functions in the pathway glycolipid biosynthesis; glycosylphosphatidylinositol-anchor biosynthesis. Part of the complex catalyzing the transfer of N-acetylglucosamine from UDP-N-acetylglucosamine to phosphatidylinositol, the first step of GPI biosynthesis. Involved in cell wall biosynthesis. This chain is Phosphatidylinositol N-acetylglucosaminyltransferase subunit GPI19 (GPI19), found in Saccharomyces cerevisiae (strain ATCC 204508 / S288c) (Baker's yeast).